Consider the following 99-residue polypeptide: UPF0729 protein CG18508 (99 aa).

The tract at residues 60-99 is disordered; it reads PGGKKTENVSDDDAEESENPPLNATAMAAETEVDESKKEI. Residues 68–77 show a composition bias toward acidic residues; the sequence is VSDDDAEESE. Ser-69 is modified (phosphoserine).

This sequence belongs to the UPF0729 family.

The chain is UPF0729 protein CG18508 from Drosophila melanogaster (Fruit fly).